Consider the following 452-residue polypeptide: General transcription and DNA repair factor IIH subunit TFB2 (452 aa).

It belongs to the TFB2 family. Component of the 7-subunit TFIIH core complex composed of XPB, XPD, TFB1/GTF2H1, GTF2H2/P44, TFB4/GTF2H3, TFB2/GTF2H4 and TFB5/GTF2H5, which is active in NER. The core complex associates with the 3-subunit CDK-activating kinase (CAK) module composed of CYCH1/cyclin H1, CDKD and MAT1/At4g30820 to form the 10-subunit holoenzyme (holo-TFIIH) active in transcription.

Its subcellular location is the nucleus. Component of the general transcription and DNA repair factor IIH (TFIIH) core complex, which is involved in general and transcription-coupled nucleotide excision repair (NER) of damaged DNA and, when complexed to CAK, in RNA transcription by RNA polymerase II. In NER, TFIIH acts by opening DNA around the lesion to allow the excision of the damaged oligonucleotide and its replacement by a new DNA fragment. In transcription, TFIIH has an essential role in transcription initiation. When the pre-initiation complex (PIC) has been established, TFIIH is required for promoter opening and promoter escape. Phosphorylation of the C-terminal tail (CTD) of the largest subunit of RNA polymerase II by the kinase module CAK controls the initiation of transcription. In Arabidopsis thaliana (Mouse-ear cress), this protein is General transcription and DNA repair factor IIH subunit TFB2.